A 158-amino-acid chain; its full sequence is MSPGRASSVSLMLLLLLSLAATVKAAAIIPQSSACPNTEAKDFLQNVKVNLKVFNSLGAKVSSRRPSDYLNRSTSPWTLHRNEDPDRYPSVIWEAQCRHQRCVNAEGKLDHHMNSVLIQQEILVLKREPESCPFTFRVEKMLVGVGCTCVASIVRQAA.

The signal sequence occupies residues 1–25 (MSPGRASSVSLMLLLLLSLAATVKA). Residue asparagine 71 is glycosylated (N-linked (GlcNAc...) asparagine). 2 disulfide bridges follow: cysteine 97–cysteine 147 and cysteine 102–cysteine 149.

The protein belongs to the IL-17 family. In terms of assembly, homodimer. Forms complexes with IL17RA and IL17RC receptors with 2:1 binding stoichiometry: two receptor chains for one interleukin molecule. IL17A homodimer preferentially drives the formation of IL17RA-IL17RC heterodimeric receptor complex. IL17A homodimer adopts an asymmetrical ternary structure with one IL17RA molecule, allowing for high affinity interactions of one IL17A monomer with one IL17RA molecule (via D1 and D2 domains), while disfavoring binding of a second IL17RA molecule on the other IL17A monomer. Heterodimer with IL17F. IL17A-IL17F forms complexes with IL17RA-IL17RC, but with lower affinity when compared to IL17A homodimer. IL17RA and IL17RC chains cannot distinguish between IL17A and IL17F molecules, potentially enabling the formation of topologically distinct complexes. Expressed by Th17 cell lineage (at protein level). The expression pattern reflects the differentiation state, with IL17A-IL17F heterodimers produced at higher levels than IL17A-IL17A and IL17F-IL17F dimers in fully differentiated Th17 cells. Expressed in innate lymphoid cells (at protein level). Expressed in gamma-delta T cell subsets (at protein level). Expressed in iNKT cells (at protein level).

The protein localises to the secreted. Its function is as follows. Effector cytokine of innate and adaptive immune system involved in antimicrobial host defense and maintenance of tissue integrity. Signals via IL17RA-IL17RC heterodimeric receptor complex, triggering homotypic interaction of IL17RA and IL17RC chains with TRAF3IP2 adapter. This leads to downstream TRAF6-mediated activation of NF-kappa-B and MAPkinase pathways ultimately resulting in transcriptional activation of cytokines, chemokines, antimicrobial peptides and matrix metalloproteinases, with potential strong immune inflammation. Plays an important role in connecting T cell-mediated adaptive immunity and acute inflammatory response to destroy extracellular bacteria and fungi. As a signature effector cytokine of T-helper 17 cells (Th17), primarily induces neutrophil activation and recruitment at infection and inflammatory sites. In airway epithelium, mediates neutrophil chemotaxis via induction of CXCL1 and CXCL5 chemokines. In secondary lymphoid organs, contributes to germinal center formation by regulating the chemotactic response of B cells to CXCL12 and CXCL13, enhancing retention of B cells within the germinal centers, B cell somatic hypermutation rate and selection toward plasma cells. Effector cytokine of a subset of gamma-delta T cells that functions as part of an inflammatory circuit downstream IL1B, TLR2 and IL23A-IL12B to promote neutrophil recruitment for efficient bacterial clearance. Effector cytokine of innate immune cells including invariant natural killer cell (iNKT) and group 3 innate lymphoid cells that mediate initial neutrophilic inflammation. Involved in the maintenance of the integrity of epithelial barriers during homeostasis and pathogen infection. Upon acute injury, has a direct role in epithelial barrier formation by regulating OCLN localization and tight junction biogenesis. As part of the mucosal immune response induced by commensal bacteria, enhances host's ability to resist pathogenic bacterial and fungal infections by promoting neutrophil recruitment and antimicrobial peptides release. In synergy with IL17F, mediates the production of antimicrobial beta-defensins DEFB1, DEFB103A, and DEFB104A by mucosal epithelial cells, limiting the entry of microbes through the epithelial barriers. Involved in antiviral host defense through various mechanisms. Enhances immunity against West Nile virus by promoting T cell cytotoxicity. May play a beneficial role in influenza A virus (H5N1) infection by enhancing B cell recruitment and immune response in the lung. Contributes to influenza A virus (H1N1) clearance by driving the differentiation of B-1a B cells, providing for production of virus-specific IgM antibodies at first line of host defense. The protein is Interleukin-17A (Il17a) of Mus musculus (Mouse).